Consider the following 172-residue polypeptide: MAKPTVNVNQAIRAREIRVVGANSEQLGIMPLNEALALAESQQLDLVEVSPTAVPPVCRIMDYGKFKYQQSKKLQEAKKKQSHVVVKEVKLRPKTDEHDLQFKIKHVRRFIEEGNKAKVTLVFRGREITHMEFGVRALERVASEIEDIAVIEMKPKMEGRSMFMIVAPKVKK.

It belongs to the IF-3 family. As to quaternary structure, monomer.

The protein resides in the cytoplasm. Functionally, IF-3 binds to the 30S ribosomal subunit and shifts the equilibrium between 70S ribosomes and their 50S and 30S subunits in favor of the free subunits, thus enhancing the availability of 30S subunits on which protein synthesis initiation begins. The protein is Translation initiation factor IF-3 of Geobacter metallireducens (strain ATCC 53774 / DSM 7210 / GS-15).